A 461-amino-acid chain; its full sequence is Adenosylmethionine-8-amino-7-oxononanoate aminotransferase (461 aa).

Residue 117 to 118 (GA) participates in pyridoxal 5'-phosphate binding. Tyr150 lines the substrate pocket. Asp263 contributes to the pyridoxal 5'-phosphate binding site. Positions 296, 331, and 426 each coordinate substrate. Lys296 carries the post-translational modification N6-(pyridoxal phosphate)lysine.

The protein belongs to the class-III pyridoxal-phosphate-dependent aminotransferase family. BioA subfamily. Homodimer. It depends on pyridoxal 5'-phosphate as a cofactor.

The protein resides in the cytoplasm. The catalysed reaction is (8S)-8-amino-7-oxononanoate + S-adenosyl-L-methionine = S-adenosyl-4-methylsulfanyl-2-oxobutanoate + (7R,8S)-7,8-diammoniononanoate. The protein operates within cofactor biosynthesis; biotin biosynthesis; 7,8-diaminononanoate from 8-amino-7-oxononanoate (SAM route): step 1/1. Catalyzes the transfer of the alpha-amino group from S-adenosyl-L-methionine (SAM) to 7-keto-8-aminopelargonic acid (KAPA) to form 7,8-diaminopelargonic acid (DAPA). It is the only aminotransferase known to utilize SAM as an amino donor. The sequence is that of Adenosylmethionine-8-amino-7-oxononanoate aminotransferase from Methanocaldococcus jannaschii (strain ATCC 43067 / DSM 2661 / JAL-1 / JCM 10045 / NBRC 100440) (Methanococcus jannaschii).